Reading from the N-terminus, the 400-residue chain is Lysophospholipid transporter LplT (400 aa).

12 consecutive transmembrane segments (helical) span residues 19 to 39 (VIVA…ATLA), 53 to 73 (VLQM…GQIA), 91 to 111 (AGAA…LVGI), 139 to 159 (LMEA…GVLA), 164 to 184 (IAAL…NLFI), 195 to 213 (SWRL…VVLW), 227 to 247 (LFWG…PVAL), 257 to 277 (YLNA…AKLV), 281 to 301 (TVSR…IFSL), 304 to 324 (ALLP…FFVV), 352 to 372 (NSAM…GVPA), and 373 to 393 (VAIG…LWIW).

Belongs to the major facilitator superfamily. LplT (TC 2.A.1.42) family.

The protein resides in the cell inner membrane. Its function is as follows. Catalyzes the facilitated diffusion of 2-acyl-glycero-3-phosphoethanolamine (2-acyl-GPE) into the cell. The protein is Lysophospholipid transporter LplT of Salmonella agona (strain SL483).